The following is a 246-amino-acid chain: MRVVVVDLDGVDGADLALERAYERAAALDDGATPATTYARDVRAPGAADGFIGDGATAAMASRTCARAWTALRAGGTVIARGGDAARDAAVLAGFADVVVDATRGVVRGTKPAWARGTAFSLKSRAVRVVTADAGWGADADVDDELIDESALLTELDVNSTAVKYDDCDVGAGKKACKNCTCGRAEAEAAEESANAKSEETFVSACGNCALGDAFRCAGCPYLGQPAFKDTDAVGTKVELDLGDDL.

Positions 1-124 are N-terminal SAM-like domain; it reads MRVVVVDLDG…ARGTAFSLKS (124 aa). The interval 125 to 158 is linker; sequence RAVRVVTADAGWGADADVDDELIDESALLTELDV. [2Fe-2S] cluster contacts are provided by C168, C177, C180, and C182. A fe-S binding site A region spans residues 168–182; sequence CDVGAGKKACKNCTC. 4 residues coordinate [4Fe-4S] cluster: C206, C209, C217, and C220. 2 short sequence motifs (cx2C motif) span residues 206-209 and 217-220; these read CGNC and CAGC. The segment at 206 to 220 is fe-S binding site B; that stretch reads CGNCALGDAFRCAGC.

It belongs to the anamorsin family. In terms of assembly, monomer. [2Fe-2S] cluster serves as cofactor. It depends on [4Fe-4S] cluster as a cofactor.

It localises to the cytoplasm. The protein localises to the mitochondrion intermembrane space. Its function is as follows. Component of the cytosolic iron-sulfur (Fe-S) protein assembly (CIA) machinery. Required for the maturation of extramitochondrial Fe-S proteins. Part of an electron transfer chain functioning in an early step of cytosolic Fe-S biogenesis, facilitating the de novo assembly of a [4Fe-4S] cluster on the cytosolic Fe-S scaffold complex. Electrons are transferred from NADPH via a FAD- and FMN-containing diflavin oxidoreductase. Together with the diflavin oxidoreductase, also required for the assembly of the diferric tyrosyl radical cofactor of ribonucleotide reductase (RNR), probably by providing electrons for reduction during radical cofactor maturation in the catalytic small subunit. In Ostreococcus tauri, this protein is Anamorsin homolog.